A 288-amino-acid polypeptide reads, in one-letter code: Bifunctional protein FolD (288 aa).

NADP(+)-binding positions include 166 to 168 (GAS) and Ile-232.

Belongs to the tetrahydrofolate dehydrogenase/cyclohydrolase family. In terms of assembly, homodimer.

It catalyses the reaction (6R)-5,10-methylene-5,6,7,8-tetrahydrofolate + NADP(+) = (6R)-5,10-methenyltetrahydrofolate + NADPH. It carries out the reaction (6R)-5,10-methenyltetrahydrofolate + H2O = (6R)-10-formyltetrahydrofolate + H(+). The protein operates within one-carbon metabolism; tetrahydrofolate interconversion. In terms of biological role, catalyzes the oxidation of 5,10-methylenetetrahydrofolate to 5,10-methenyltetrahydrofolate and then the hydrolysis of 5,10-methenyltetrahydrofolate to 10-formyltetrahydrofolate. In Klebsiella pneumoniae (strain 342), this protein is Bifunctional protein FolD.